A 277-amino-acid chain; its full sequence is MDAETLSLSLELVSGSGPGLSAEQCAALRASLPLLHRDLRLRRLRLWGVVLGLRGDYVIARGWGGPDLLRGQLSFYSLNCVDWCLLPPATDAHIAQTQGIKGRFVGDPAHEYEYIVRNTAGGGDSALEEELTTHIKEEVRLTGTIAMIDREAAVAPRGAYIRNPLGQVIVNHSFRGLEVSEGKKLSSYFHFTPSLNPKKKSLLEKAALDPSIDFLDSLEHDIPRGSWSLQLEQGDSVLILRSLLWLGMTFYHVPLTPLHGHLYIGTGERNLDLPFMI.

This sequence belongs to the flagellar radial spoke RSP9 family. Component of axonemal radial spoke complexes.

Its subcellular location is the cytoplasm. It is found in the cytoskeleton. The protein resides in the cilium axoneme. The protein localises to the flagellum axoneme. It localises to the cell projection. Its subcellular location is the kinocilium. Its function is as follows. Functions as part of axonemal radial spoke complexes that play an important part in the motility of sperm and cilia. Essential for both the radial spoke head assembly and the central pair microtubule stability in ependymal motile cilia. Required for motility of olfactory and neural cilia and for the structural integrity of ciliary axonemes in both 9+0 and 9+2 motile cilia. The sequence is that of Radial spoke head protein 9 homolog (rsph9) from Xenopus tropicalis (Western clawed frog).